The primary structure comprises 522 residues: Gypsy retrotransposon integrase-like protein 1 (522 aa).

Residues 135–292 (KVENPWSLVT…TPYFQMFSRN (158 aa)) enclose the Integrase catalytic domain.

This chain is Gypsy retrotransposon integrase-like protein 1 (GIN1), found in Macaca fascicularis (Crab-eating macaque).